The following is a 664-amino-acid chain: RBBP8 N-terminal-like protein (664 aa).

The span at 125 to 140 shows a compositional bias: basic and acidic residues; that stretch reads LRGLGDRPKPRAKEGT. Disordered regions lie at residues 125–284 and 369–664; these read LRGL…KLSP and RAGS…WEET. Residues 241 to 255 show a composition bias toward pro residues; that stretch reads GTPPPLPARSSPPSP. A compositionally biased stretch (basic and acidic residues) spans 437 to 454; the sequence is ALDKPLDLSEWGRARGQD. Residues 481 to 496 show a composition bias toward polar residues; that stretch reads SGPLTRSPQALSNGTK. Residues 516–528 show a composition bias toward low complexity; the sequence is LPGSQLSLSSPGS. Residues 537–552 show a composition bias toward pro residues; it reads PLPPPHPQPPPHPQPP. A compositionally biased stretch (basic and acidic residues) spans 554–570; it reads LDGHPEPSKAEVLRPES. Residues 584–597 are compositionally biased toward polar residues; the sequence is GLSSQAEATTSTTG. Residues 628-637 show a composition bias toward basic residues; it reads KKPSRGRRKL. Residues 654-664 are compositionally biased toward polar residues; the sequence is PSPNSSPWEET.

The protein is RBBP8 N-terminal-like protein (RBBP8NL) of Homo sapiens (Human).